Here is a 298-residue protein sequence, read N- to C-terminus: Inosose dehydratase (298 aa).

Belongs to the IolE/MocC family. It depends on glutathione as a cofactor. Requires Co(2+) as cofactor. Mn(2+) is required as a cofactor.

The catalysed reaction is scyllo-inosose = 3D-3,5/4-trihydroxycyclohexane-1,2-dione + H2O. The protein operates within polyol metabolism; myo-inositol degradation into acetyl-CoA; acetyl-CoA from myo-inositol: step 2/7. Functionally, catalyzes the dehydration of inosose (2-keto-myo-inositol, 2KMI or 2,4,6/3,5-pentahydroxycyclohexanone) to 3D-(3,5/4)-trihydroxycyclohexane-1,2-dione (D-2,3-diketo-4-deoxy-epi-inositol). The sequence is that of Inosose dehydratase from Clostridium beijerinckii (strain ATCC 51743 / NCIMB 8052) (Clostridium acetobutylicum).